The primary structure comprises 431 residues: Large envelope protein (431 aa).

The N-myristoyl glycine; by host moiety is linked to residue Gly-2. The segment at 2–148 (GNNIKVTFNP…PPLRDTHPHL (147 aa)) is pre-S1. The segment at 2–207 (GNNIKVTFNP…PSTTGDPALS (206 aa)) is pre-S. Residues 2-214 (GNNIKVTFNP…ALSPEMSPSS (213 aa)) lie on the Virion surface; in external conformation side of the membrane. At 2–286 (GNNIKVTFNP…NGFRWMYLRR (285 aa)) the chain is on the intravirion; in internal conformation side. Residue Asn-3 is glycosylated (N-linked (GlcNAc...) asparagine). The interval 115–147 (IPRGLVPPQTPTNRDQGRKPTPPTPPLRDTHPH) is disordered. Residues 149–207 (TMKNQTFHLQGFVDGLRDLTTTERQHNAYGDPFTTLSPAVPTVSTILSPPSTTGDPALS) form a pre-S2 region. The helical transmembrane segment at 215 to 235 (LLGLLAGLQVVYFLWTKILTI) threads the bilayer. Residues 236–286 (AQNLDWWWTSLSFPGGIPECTGQNSQFQTCKHLPTSCPPTCNGFRWMYLRR) are Intravirion; in external conformation-facing. A helical transmembrane segment spans residues 287–307 (FIIYLLVLLLCLIFLLVLLDW). The Virion surface segment spans residues 308–379 (KGLIPVCPLQ…WALARFSWLN (72 aa)). Asn-351 carries N-linked (GlcNAc...) asparagine; by host glycosylation. A helical transmembrane segment spans residues 380-400 (LLVPLLQWLGGISLIAWFLLI). At 401-406 (WMIWFW) the chain is on the intravirion side. A helical transmembrane segment spans residues 407–429 (GPALLSILPPFIPIFVLFFLIWV). Over 430-431 (YI) the chain is Virion surface.

The protein belongs to the orthohepadnavirus major surface antigen family. In terms of assembly, in its internal form (Li-HBsAg), interacts with the capsid protein and with the isoform S. Interacts with host chaperone CANX. Associates with host chaperone CANX through its pre-S2 N glycan; this association may be essential for isoform M proper secretion. As to quaternary structure, interacts with isoform L. Interacts with the antigens of satellite virus HDV (HDVAgs); this interaction is required for encapsidation of HDV genomic RNA. Isoform M is N-terminally acetylated by host at a ratio of 90%, and N-glycosylated by host at the pre-S2 region. In terms of processing, myristoylated.

It localises to the virion membrane. In terms of biological role, the large envelope protein exists in two topological conformations, one which is termed 'external' or Le-HBsAg and the other 'internal' or Li-HBsAg. In its external conformation the protein attaches the virus to cell receptors and thereby initiating infection. This interaction determines the species specificity and liver tropism. This attachment induces virion internalization predominantly through caveolin-mediated endocytosis. The large envelope protein also assures fusion between virion membrane and endosomal membrane. In its internal conformation the protein plays a role in virion morphogenesis and mediates the contact with the nucleocapsid like a matrix protein. Functionally, the middle envelope protein plays an important role in the budding of the virion. It is involved in the induction of budding in a nucleocapsid independent way. In this process the majority of envelope proteins bud to form subviral lipoprotein particles of 22 nm of diameter that do not contain a nucleocapsid. The protein is Large envelope protein of Woodchuck hepatitis B virus (isolate 7) (WHV).